The sequence spans 657 residues: 1-deoxy-D-xylulose-5-phosphate synthase (657 aa).

Thiamine diphosphate contacts are provided by residues H73 and 113-115 (SHA). D145 serves as a coordination point for Mg(2+). Thiamine diphosphate is bound by residues 146–147 (GA), N175, Y293, and E375. Residue N175 participates in Mg(2+) binding.

This sequence belongs to the transketolase family. DXPS subfamily. In terms of assembly, homodimer. Mg(2+) serves as cofactor. Requires thiamine diphosphate as cofactor.

It carries out the reaction D-glyceraldehyde 3-phosphate + pyruvate + H(+) = 1-deoxy-D-xylulose 5-phosphate + CO2. Its pathway is metabolic intermediate biosynthesis; 1-deoxy-D-xylulose 5-phosphate biosynthesis; 1-deoxy-D-xylulose 5-phosphate from D-glyceraldehyde 3-phosphate and pyruvate: step 1/1. Its function is as follows. Catalyzes the acyloin condensation reaction between C atoms 2 and 3 of pyruvate and glyceraldehyde 3-phosphate to yield 1-deoxy-D-xylulose-5-phosphate (DXP). The polypeptide is 1-deoxy-D-xylulose-5-phosphate synthase (Paenarthrobacter aurescens (strain TC1)).